A 496-amino-acid chain; its full sequence is Genome polyprotein (496 aa).

Residues 1–447 (SRCTHLENRD…HTVLGGAFNS (447 aa)) lie on the Extracellular side of the membrane. Disulfide bonds link Cys-3/Cys-30, Cys-60/Cys-116, Cys-60/Cys-121, Cys-74/Cys-105, Cys-92/Cys-116, and Cys-92/Cys-121. The interval 98 to 111 (DRGWGNHCGLFGKG) is fusion peptide. Asn-154 carries an N-linked (GlcNAc...) asparagine; by host glycan. Intrachain disulfides connect Cys-186–Cys-290 and Cys-307–Cys-338. A helical transmembrane segment spans residues 448–468 (IFGGVGFLPKLLMGVALAWLG). Residues 469-479 (LNTRNPTMSMS) are Cytoplasmic-facing. The helical transmembrane segment at 480 to 496 (FLLAGGLVLAMTLGVGA) threads the bilayer.

In terms of assembly, homodimer; in the endoplasmic reticulum and Golgi. N-glycosylated.

It localises to the virion membrane. The protein localises to the host endoplasmic reticulum membrane. In terms of biological role, binds to host cell surface receptor and mediates fusion between viral and cellular membranes. Envelope protein is synthesized in the endoplasmic reticulum in the form of heterodimer with protein prM. They play a role in virion budding in the ER, and the newly formed immature particle is covered with 60 spikes composed of heterodimer between precursor prM and envelope protein E. The virion is transported to the Golgi apparatus where the low pH causes dissociation of PrM-E heterodimers and formation of E homodimers. prM-E cleavage is ineficient, and many virions are only partially matured. These uncleaved prM would play a role in immune evasion. This chain is Genome polyprotein, found in Bos taurus (Bovine).